A 201-amino-acid chain; its full sequence is DeSI-like protein sdu1 (201 aa).

Residues 1–143 (MKVYINVYDL…AFPTITNALL (143 aa)) form the PPPDE domain. Catalysis depends on residues histidine 29 and cysteine 105. The disordered stretch occupies residues 146 to 201 (GQKNTSDVDDSSDSSSDVDEETLIVSKSKKAHKDIPKFSAPPPSADLNNLITDSLP). Positions 152–167 (DVDDSSDSSSDVDEET) are enriched in acidic residues. Residues 191–201 (DLNNLITDSLP) show a composition bias toward polar residues.

It belongs to the DeSI family.

It localises to the cytoplasm. Functionally, has a role in meiosis. This Schizosaccharomyces pombe (strain 972 / ATCC 24843) (Fission yeast) protein is DeSI-like protein sdu1 (sdu1).